A 359-amino-acid polypeptide reads, in one-letter code: Peptide chain release factor 1 (359 aa).

The residue at position 235 (Q235) is an N5-methylglutamine. The segment covering 282-307 has biased composition (basic and acidic residues); it reads RQRADSERSADRKSQVGSGDRSERIR. Positions 282-309 are disordered; it reads RQRADSERSADRKSQVGSGDRSERIRTY.

It belongs to the prokaryotic/mitochondrial release factor family. Methylated by PrmC. Methylation increases the termination efficiency of RF1.

The protein resides in the cytoplasm. In terms of biological role, peptide chain release factor 1 directs the termination of translation in response to the peptide chain termination codons UAG and UAA. In Allorhizobium ampelinum (strain ATCC BAA-846 / DSM 112012 / S4) (Agrobacterium vitis (strain S4)), this protein is Peptide chain release factor 1.